The primary structure comprises 202 residues: Peptide methionine sulfoxide reductase A3 (202 aa).

Residues 1–34 (MNILNRLGLGSSGQTNMDPSPIAQGNDDDTPAPG) are disordered. The residue at position 189 (Ser189) is a Phosphoserine.

This sequence belongs to the MsrA Met sulfoxide reductase family. In terms of tissue distribution, expressed in rosette and cauline leaves, and at lower levels in roots, stems and flowers (at protein level).

The protein localises to the cytoplasm. It localises to the cytosol. The enzyme catalyses L-methionyl-[protein] + [thioredoxin]-disulfide + H2O = L-methionyl-(S)-S-oxide-[protein] + [thioredoxin]-dithiol. The catalysed reaction is [thioredoxin]-disulfide + L-methionine + H2O = L-methionine (S)-S-oxide + [thioredoxin]-dithiol. In terms of biological role, catalyzes the reduction of methionine sulfoxide (MetSO) to methionine in proteins. Plays a protective role against oxidative stress by restoring activity to proteins that have been inactivated by methionine oxidation. May prevent cellular oxidative damage due to light exposure. MSRA family specifically reduces the MetSO S-enantiomer. The polypeptide is Peptide methionine sulfoxide reductase A3 (MSRA3) (Arabidopsis thaliana (Mouse-ear cress)).